The following is a 727-amino-acid chain: Glucans biosynthesis glucosyltransferase H (727 aa).

Residues 18–41 are disordered; it reads SAMPNERPGAMEPQKLSKMPEGFP. The next 7 membrane-spanning stretches (helical) occupy residues 58–78, 97–117, 278–298, 408–428, 460–480, 496–516, and 572–592; these read FLVV…MGAV, VNFC…LILL, LQQF…GWWV, IMAY…LMLA, LFYI…LLLL, IFSV…MMFI, and LLAW…ISAW.

It belongs to the glycosyltransferase 2 family. OpgH subfamily.

The protein localises to the cell inner membrane. It functions in the pathway glycan metabolism; osmoregulated periplasmic glucan (OPG) biosynthesis. In terms of biological role, involved in the biosynthesis of osmoregulated periplasmic glucans (OPGs). The sequence is that of Glucans biosynthesis glucosyltransferase H from Shewanella baltica (strain OS155 / ATCC BAA-1091).